The chain runs to 120 residues: NAD(P)H-quinone oxidoreductase subunit 3, chloroplastic (120 aa).

3 helical membrane-spanning segments follow: residues 9–29, 60–80, and 88–108; these read IFWA…IISG, ICYY…VFLY, and ILGV…IVGS.

The protein belongs to the complex I subunit 3 family. As to quaternary structure, NDH is composed of at least 16 different subunits, 5 of which are encoded in the nucleus.

It localises to the plastid. The protein resides in the chloroplast thylakoid membrane. The catalysed reaction is a plastoquinone + NADH + (n+1) H(+)(in) = a plastoquinol + NAD(+) + n H(+)(out). The enzyme catalyses a plastoquinone + NADPH + (n+1) H(+)(in) = a plastoquinol + NADP(+) + n H(+)(out). Functionally, NDH shuttles electrons from NAD(P)H:plastoquinone, via FMN and iron-sulfur (Fe-S) centers, to quinones in the photosynthetic chain and possibly in a chloroplast respiratory chain. The immediate electron acceptor for the enzyme in this species is believed to be plastoquinone. Couples the redox reaction to proton translocation, and thus conserves the redox energy in a proton gradient. The polypeptide is NAD(P)H-quinone oxidoreductase subunit 3, chloroplastic (Morus indica (Mulberry)).